The following is a 476-amino-acid chain: Variant surface glycoprotein MITAT 1.2 (476 aa).

The signal sequence occupies residues 1–26 (MPSNQEARLFLAVLVLAQVLPILVDS). Intrachain disulfides connect Cys-41-Cys-171 and Cys-149-Cys-213. Asn-289 is a glycosylation site (N-linked (GlcNAc...) asparagine). Disordered stretches follow at residues 389–418 (QKHKPAESQQQAAETEGSCNKKDQNECKSP) and 435–459 (EEAKKVADETAKDGKTGNTNTTGSS). 2 disulfide bridges follow: Cys-407–Cys-419 and Cys-415–Cys-430. The segment covering 435–449 (EEAKKVADETAKDGK) has biased composition (basic and acidic residues). Over residues 450–459 (TGNTNTTGSS) the composition is skewed to low complexity. An N-linked (GlcNAc...) asparagine glycan is attached at Asn-454. A lipid anchor (GPI-anchor amidated serine) is attached at Ser-459. A propeptide spans 460-476 (NSFVISKTPLWLAVLLF) (removed in mature form).

As to quaternary structure, homodimer.

The protein localises to the cell membrane. Functionally, VSG forms a coat on the surface of the parasite. The trypanosome evades the immune response of the host by expressing a series of antigenically distinct VSGs from an estimated 1000 VSG genes. This chain is Variant surface glycoprotein MITAT 1.2, found in Trypanosoma brucei brucei.